The primary structure comprises 318 residues: uncharacterized protein (318 aa).

Residues 19–63 are disordered; it reads VPPDARHHEPRPGMTDHPDTGNGIGLTGRPPRAIPDPAPRSSHGP. Over residues 21–37 the composition is skewed to basic and acidic residues; the sequence is PDARHHEPRPGMTDHPD. 72 to 79 serves as a coordination point for ATP; that stretch reads QKGGVGKT.

Belongs to the ParA family.

In terms of biological role, may play a role in septum formation. This is an uncharacterized protein from Mycobacterium tuberculosis (strain CDC 1551 / Oshkosh).